Consider the following 160-residue polypeptide: uncharacterized protein (160 aa).

This is an uncharacterized protein from Escherichia coli (strain K12).